Here is a 395-residue protein sequence, read N- to C-terminus: General transcription factor IIH subunit 2-like protein (395 aa).

The 177-residue stretch at 60–236 folds into the VWFA domain; sequence HLYVVVDGSR…HYKELLTHHL (177 aa). Tyrosine 95 bears the Phosphotyrosine mark. Residues 291-308 form a C4-type zinc finger; it reads CPQCRAKYCELPVECKIC.

This sequence belongs to the GTF2H2 family.

Its subcellular location is the nucleus. Its function is as follows. Component of the core-TFIIH basal transcription factor involved in nucleotide excision repair (NER) of DNA and, when complexed to CAK, in RNA transcription by RNA polymerase II. This chain is General transcription factor IIH subunit 2-like protein (GTF2H2C), found in Homo sapiens (Human).